The following is a 228-amino-acid chain: UPF0173 metal-dependent hydrolase PTH_1415 (228 aa).

It belongs to the UPF0173 family.

This is UPF0173 metal-dependent hydrolase PTH_1415 from Pelotomaculum thermopropionicum (strain DSM 13744 / JCM 10971 / SI).